A 357-amino-acid chain; its full sequence is Transcription factor PCF6 (357 aa).

The interval 1–29 is disordered; sequence MEAAVGDGEGGGGGGGRGKRGRGGGGGEM. Over residues 7 to 16 the composition is skewed to gly residues; it reads DGEGGGGGGG. A TCP domain is found at 52 to 110; that stretch reads GKDRHSKVYTAKGIRDRRVRLSVATAIQFYDLQDRLGFDQPSKAIEWLINAASPAIDTL. Disordered regions lie at residues 125 to 162 and 281 to 307; these read AADA…DKEV and ANRG…QQLQ. Polar residues-rich tracts occupy residues 142–155 and 284–295; these read LSNK…SETS and GTLQSNSPSNMS.

Forms homodimers and heterodimers.

Its subcellular location is the nucleus. Transcription activator. Binds the promoter core sequence 5'-GGNCC-3'. The chain is Transcription factor PCF6 (PCF6) from Oryza sativa subsp. japonica (Rice).